Here is a 285-residue protein sequence, read N- to C-terminus: Vesicle-associated membrane protein 725 (285 aa).

The Cytoplasmic segment spans residues 1-261 (MDRSVVPISL…MWFENMKIKL (261 aa)). Positions 75 to 179 (FVARGTVILV…SLNREFGSKL (105 aa)) constitute a Longin domain. The region spanning 195–255 (KLAKVKAQVT…TKIRRKMWFE (61 aa)) is the v-SNARE coiled-coil homology domain. The chain crosses the membrane as a helical; Anchor for type IV membrane protein span at residues 262 to 282 (IVLGIIITLILIIILSVCGGF). The Vesicular segment spans residues 283–285 (KCT).

Belongs to the synaptobrevin family. Expressed in flowers, leaves, stems and roots.

It localises to the cell membrane. The protein localises to the early endosome membrane. In terms of biological role, involved in the targeting and/or fusion of transport vesicles to their target membrane. The protein is Vesicle-associated membrane protein 725 of Arabidopsis thaliana (Mouse-ear cress).